Reading from the N-terminus, the 71-residue chain is MKEKIHPEMKLVTVKCACGAEHKFYTTLENVRIDVCSNCHPLYKGMSGASLVIDSEGRIEKFRRKYKDQQY.

Residues cysteine 16, cysteine 18, cysteine 36, and cysteine 39 each coordinate Zn(2+).

This sequence belongs to the bacterial ribosomal protein bL31 family. Type A subfamily. As to quaternary structure, part of the 50S ribosomal subunit. It depends on Zn(2+) as a cofactor.

Its function is as follows. Binds the 23S rRNA. This Pseudothermotoga lettingae (strain ATCC BAA-301 / DSM 14385 / NBRC 107922 / TMO) (Thermotoga lettingae) protein is Large ribosomal subunit protein bL31.